The chain runs to 254 residues: 3-deoxy-manno-octulosonate cytidylyltransferase (254 aa).

The protein belongs to the KdsB family.

The protein localises to the cytoplasm. It catalyses the reaction 3-deoxy-alpha-D-manno-oct-2-ulosonate + CTP = CMP-3-deoxy-beta-D-manno-octulosonate + diphosphate. It functions in the pathway nucleotide-sugar biosynthesis; CMP-3-deoxy-D-manno-octulosonate biosynthesis; CMP-3-deoxy-D-manno-octulosonate from 3-deoxy-D-manno-octulosonate and CTP: step 1/1. Its pathway is bacterial outer membrane biogenesis; lipopolysaccharide biosynthesis. In terms of biological role, activates KDO (a required 8-carbon sugar) for incorporation into bacterial lipopolysaccharide in Gram-negative bacteria. This chain is 3-deoxy-manno-octulosonate cytidylyltransferase, found in Tolumonas auensis (strain DSM 9187 / NBRC 110442 / TA 4).